The chain runs to 497 residues: MHQVEEIILIVENLAEVRGKTPHYRHLYVQVLAAIAVGILLGYFYPDVGSKMKPLGDAFIMLVKMIIAPVIFLTVATGIAGMTDLAKVGRVAGKAMIYFLTFSTLALLVGLVVANVVQPGAGMHIDPASLDAKAIATYAEKAHEQSVTGFLMNIIPTTLVGAFAEGDILQVLFISVLFGISLAIVGKKAEAVVDFLHALTLPIFRLVAILMKAAPIGAFGAMAFTIGKYGVASIANLAMLIGTFYLTSFLFVFMVLGAVARYNGFSIVALIRYIKEELLLVLGTSSSEAALPGLMNKMEKAGCKRSVVGLVIPTGYSFNLDGTNIYMTLAALFIAQATDTPISYGDQILLLLIAMLSSKGAAGITGAGFITLAATLSAVPSVPVAGMALILGIDRFMSECRAITNIIGNAVATIVVAKWEGELAPAQLATTLAGKAPVETMSGLSSQRSDTVELGQKVLFGATNSADRTLAGRPGGRDSRRIAPDHSAQVFGGPLSL.

8 consecutive transmembrane segments (helical) span residues 27 to 45, 60 to 82, 95 to 117, 168 to 185, 205 to 227, 237 to 259, 348 to 370, and 374 to 393; these read LYVQVLAAIAVGILLGYFY, IMLVKMIIAPVIFLTVATGIAGM, AMIYFLTFSTLALLVGLVVANVV, ILQVLFISVLFGISLAIV, RLVAILMKAAPIGAFGAMAFTIG, LAMLIGTFYLTSFLFVFMVLGAV, ILLLLIAMLSSKGAAGITGAGFI, and ATLSAVPSVPVAGMALILGI. Residues 466 to 497 are disordered; the sequence is ADRTLAGRPGGRDSRRIAPDHSAQVFGGPLSL. Positions 475 to 484 are enriched in basic and acidic residues; the sequence is GGRDSRRIAP.

Belongs to the dicarboxylate/amino acid:cation symporter (DAACS) (TC 2.A.23) family.

The protein resides in the cell inner membrane. Functionally, responsible for the transport of dicarboxylates such as succinate, fumarate, and malate from the periplasm across the inner membrane. This transport system plays an essential role in the energy supply of tropical rhizobium-legume symbionts. This Sinorhizobium fredii (strain NBRC 101917 / NGR234) protein is C4-dicarboxylate transport protein (dctA1).